A 210-amino-acid polypeptide reads, in one-letter code: MKLKFCGFTSIKDVTAASQLPIDAIGFIHYEKSKRHQTITQIKKLASAVPDHIDKVCVVVNPDLTTIEHVLSNTPINTIQLHGTESIDFIQEIKKKYSSIKITKALAADENIIQNINKYKGFVDLFIIDTPSVSYGGTGQTYDWTILKNIKDIPYLIAGGINTENIQTVNQFKLSHQGFDLASGIEVNGRKDIEKMTAIVNIVKGDRENE.

This sequence belongs to the TrpF family.

The catalysed reaction is N-(5-phospho-beta-D-ribosyl)anthranilate = 1-(2-carboxyphenylamino)-1-deoxy-D-ribulose 5-phosphate. Its pathway is amino-acid biosynthesis; L-tryptophan biosynthesis; L-tryptophan from chorismate: step 3/5. This is N-(5'-phosphoribosyl)anthranilate isomerase from Staphylococcus aureus (strain MRSA252).